The chain runs to 78 residues: Exodeoxyribonuclease 7 small subunit (78 aa).

The protein belongs to the XseB family. As to quaternary structure, heterooligomer composed of large and small subunits.

The protein resides in the cytoplasm. The catalysed reaction is Exonucleolytic cleavage in either 5'- to 3'- or 3'- to 5'-direction to yield nucleoside 5'-phosphates.. In terms of biological role, bidirectionally degrades single-stranded DNA into large acid-insoluble oligonucleotides, which are then degraded further into small acid-soluble oligonucleotides. This is Exodeoxyribonuclease 7 small subunit from Paracoccus zeaxanthinifaciens.